We begin with the raw amino-acid sequence, 280 residues long: MHFTKAHGLGNDFILVDCFKEKVNPEDFPGLAVKMCDRHFGVGADGLVLLLPSPSADVSMRIFNPDGSEAEMCGNAIRCVAKYLYERGMVKADRIRVETLAGVMIPELLVEEGRVRLVRVDMGEPRLERSEIPMEGPPGRVLGEPLETGGAVYRITAVSMGNPHCVIFVQDLDAVPFQTAGPLIETHPAFPRRTNVEFIQVLTPEEIKMRVWERGAGETMACGTGACAAVVAGVLNGYTGRRVTVHLKAGDLFIEWPEGKHVYMSGPAEEVFSGEYPYRT.

N11 and N64 together coordinate substrate. The active-site Proton donor is C73. Residues 74–75, N162, N195, and 213–214 each bind substrate; these read GN and ER. The active-site Proton acceptor is C222. Residue 223-224 participates in substrate binding; the sequence is GT.

It belongs to the diaminopimelate epimerase family. In terms of assembly, homodimer.

The protein resides in the cytoplasm. It carries out the reaction (2S,6S)-2,6-diaminopimelate = meso-2,6-diaminopimelate. Its pathway is amino-acid biosynthesis; L-lysine biosynthesis via DAP pathway; DL-2,6-diaminopimelate from LL-2,6-diaminopimelate: step 1/1. Catalyzes the stereoinversion of LL-2,6-diaminopimelate (L,L-DAP) to meso-diaminopimelate (meso-DAP), a precursor of L-lysine and an essential component of the bacterial peptidoglycan. This chain is Diaminopimelate epimerase, found in Pelotomaculum thermopropionicum (strain DSM 13744 / JCM 10971 / SI).